The chain runs to 283 residues: Aldo-keto reductase Mmcs_1938 (283 aa).

The active-site Proton donor is the Y58. Positions 196, 198, 200, 236, 238, 239, 240, 244, 247, 248, and 274 each coordinate NADPH.

This sequence belongs to the aldo/keto reductase family.

The chain is Aldo-keto reductase Mmcs_1938 from Mycobacterium sp. (strain MCS).